We begin with the raw amino-acid sequence, 4218 residues long: Protein Obscurin (4218 aa).

The SH3 domain occupies 3 to 71 (AVADIVFVSR…PIDILEFNPT (69 aa)). Positions 86-264 (RKLTILRELV…LSVPSRAYDN (179 aa)) constitute a DH domain. Positions 439–466 (SKETKERLQHEQQELLKLEQEAIELYKK) form a coiled coil. Disordered stretches follow at residues 465–592 (KKQQ…SHSK), 684–703 (SLRDGDTAPAGGSPGRQQGY), 728–750 (SGANQHLQQSGPPPPPIPPNFTR), and 923–1010 (RYET…EDRP). Composition is skewed to low complexity over residues 466–490 (KQQSSKSVSSKTESVEITSSQVKSS) and 505–517 (AQVKEVTPVKVVS). Basic and acidic residues predominate over residues 578 to 592 (KEVRKEVPPSASHSK). Basic and acidic residues predominate over residues 923–935 (RYETKTRDYDRGT). Over residues 936 to 948 (SYDSTVERSQYGI) the composition is skewed to polar residues. Basic and acidic residues-rich tracts occupy residues 950-962 (SRRDRSSVDKVEA) and 972-986 (TESRAASRAESRAES). The segment covering 987–996 (RASYSVAESR) has biased composition (low complexity). Ig-like C2-type domains lie at 1017–1103 (PVVV…TTVS), 1152–1298 (PRVK…AELS), 1313–1400 (PTLV…SSIN), 1504–1594 (PVIV…TQLL), 1599–1689 (PEFT…CVVT), 1694–1785 (PKVK…CKVA), 1815–1906 (PEIV…LSLS), 2018–2107 (PEIS…FNLA), 2113–2214 (PTFI…FKLA), 2220–2305 (PSFV…EKVA), 2318–2409 (PKFL…VEIV), 2415–2505 (PVFV…AKLY), 2519–2609 (PQFV…ANVR), 2614–2698 (PPVF…KDIT), and 2716–2792 (PPVF…SCRI). The cysteines at positions 1199 and 1282 are disulfide-linked. Cys2739 and Cys2790 are oxidised to a cystine. A Fibronectin type-III 1 domain is found at 2832–2933 (APPPLSEGPI…TYRQKLVPDP (102 aa)). Residues 3186-3440 (YDIGDELGRG…VKTALKHPWF (255 aa)) form the Protein kinase 1 domain. Residues Gly3198, Lys3215, Glu3260, Ala3262, Glu3266, Lys3310, and Asp3326 each contribute to the ATP site. Positions 3654-3738 (PFFREKPQTI…ARNKVGQTVA (85 aa)) constitute an Ig-like C2-type 16 domain. In terms of domain architecture, Fibronectin type-III 2 spans 3750–3843 (APDSPEISAN…IPVSASTVGG (94 aa)). The 255-residue stretch at 3897–4151 (YSFISEIARG…TEDCLEHRWL (255 aa)) folds into the Protein kinase 2 domain.

The protein belongs to the protein kinase superfamily. CAMK Ser/Thr protein kinase family. In terms of assembly, interacts with myosin. May interact (via protein kinase domain 1) with ball. May interact (via protein kinase domain 1 or 2) with mask. May interact (via protein kinase domain 2) with Tm1/tropomyosin-1. In terms of tissue distribution, expressed in the thoracic muscles including the indirect flight muscles (IFM) (at protein level).

The protein localises to the cytoplasm. The protein resides in the myofibril. It is found in the sarcomere. Its subcellular location is the m line. In terms of biological role, structural component of the muscle M line which is involved in assembly and organization of sarcomere. Required for the development and organization of indirect flight muscle sarcomeres by regulating the formation of M line and H zone and the correct assembly of thick and thin filaments in the sarcomere. Lacks serine/threonine-protein kinase activity. This Drosophila melanogaster (Fruit fly) protein is Protein Obscurin.